The chain runs to 107 residues: MTLNITSKQMDITPAIREHLEERLAKLGKWQTQLISPHFVLNKVPNGFSVEASIGTPLGNLLASATSDDMYKAINEVEEKLERQLNKLQHKSESRRADERLKDSFEN.

Residues 85 to 107 form a disordered region; sequence LNKLQHKSESRRADERLKDSFEN.

Associates mainly with 70S ribosomes.

During stationary phase, prevents 70S dimer formation, probably in order to regulate translation efficiency during transition between the exponential and the stationary phases. In addition, during environmental stress such as cold shock or excessive cell density at stationary phase, stabilizes the 70S ribosome against dissociation, inhibits translation initiation and increase translation accuracy. When normal growth conditions are restored, is quickly released from the ribosome. The protein is Ribosome-associated factor Y of Haemophilus influenzae (strain ATCC 51907 / DSM 11121 / KW20 / Rd).